The primary structure comprises 326 residues: MSWLTPDVIEILLSILKAVVILLVVVSCGAFMSFGERRLLGLFQNRYGPNRVGWGGSLQLVADMIKMFFKEDWIPRFSDRVIFTLAPMIAFTSLLLAFAIVPVSPTWVVADLNIGILFFLMMAGLGVYAVLFAGWSSNNKYSLLGAMRASAQTLSYEVFLGLSLMGVVAQAGSFNMTDIVNNQAHLWNVIPQFFGFITFAIAGVAVCHRHPFDQPEAEQELADGYHIEYSGMKFGLFFVGEYIGIVTVSALIVTLFFGGWQGPWLPPFIWFALKTAFFMMMFILIRAALPRPRYDQVMSFGWKVCLPLTLINLLVTAAVILWQTAA.

The next 8 helical transmembrane spans lie at 11 to 31 (ILLS…CGAF), 81 to 101 (VIFT…FAIV), 114 to 134 (IGIL…LFAG), 154 to 174 (LSYE…AGSF), 186 to 206 (LWNV…GVAV), 237 to 257 (FFVG…TLFF), 265 to 285 (LPPF…FILI), and 302 to 322 (WKVC…VILW).

Belongs to the complex I subunit 1 family. In terms of assembly, NDH-1 is composed of 13 different subunits. Subunits NuoA, H, J, K, L, M, N constitute the membrane sector of the complex.

It localises to the cell inner membrane. The enzyme catalyses a quinone + NADH + 5 H(+)(in) = a quinol + NAD(+) + 4 H(+)(out). NDH-1 shuttles electrons from NADH, via FMN and iron-sulfur (Fe-S) centers, to quinones in the respiratory chain. The immediate electron acceptor for the enzyme in this species is believed to be ubiquinone. Couples the redox reaction to proton translocation (for every two electrons transferred, four hydrogen ions are translocated across the cytoplasmic membrane), and thus conserves the redox energy in a proton gradient. This subunit may bind ubiquinone. This chain is NADH-quinone oxidoreductase subunit H, found in Cronobacter sakazakii (strain ATCC BAA-894) (Enterobacter sakazakii).